Reading from the N-terminus, the 2944-residue chain is Collagen alpha-1(VII) chain (2944 aa).

The N-terminal stretch at 1–24 (MRLRLLVAALCAAEILMGAPEVWA) is a signal peptide. A nonhelical region (NC1) region spans residues 18–1254 (GAPEVWAQPR…TGPCAVHCPK (1237 aa)). The VWFA 1 domain occupies 39-212 (DIVFLLDGSS…SILRTLLPLI (174 aa)). Fibronectin type-III domains are found at residues 235-330 (GPRD…TAKE), 331-417 (GLEL…TASS), 418-508 (VEQT…LEQL), 511-598 (PVMN…DPEA), 601-688 (VVPG…DPLG), 689-776 (PVRR…APEP), 779-867 (SVSK…PPAT), 870-957 (LLET…EPSH), and 959-1053 (PSTE…SHGP). A glycan (N-linked (GlcNAc...) asparagine) is linked at Asn-338. Asn-787 carries N-linked (GlcNAc...) asparagine glycosylation. Positions 1055–1230 (DVVFLLHATR…PGLDRAVSDL (176 aa)) constitute a VWFA 2 domain. N-linked (GlcNAc...) asparagine glycosylation occurs at Asn-1110. The Cell attachment site motif lies at 1171-1173 (RGD). The interval 1255–1475 (GQKGEPGVTG…GLRGAPGMTG (221 aa)) is interrupted collagenous region. Residues 1255–2775 (GQKGEPGVTG…GPRGEKGEAA (1521 aa)) are triple-helical region. Disordered regions lie at residues 1259–1934 (EPGV…GSLP) and 1960–2773 (SSGS…EKGE). Residues 1338–1352 (RGPQGPKGEPGEPGQ) show a composition bias toward low complexity. A compositionally biased stretch (gly residues) spans 1353–1363 (ITGGGGPGFPG). 2 stretches are compositionally biased toward basic and acidic residues: residues 1397-1406 (KGDKGDRGER) and 1439-1448 (PGEKGEKGDC). Over residues 1507–1518 (PGAAGHPGVEGP) the composition is skewed to low complexity. Basic and acidic residues-rich tracts occupy residues 1527–1536 (RRGEKGEPGR), 1627–1639 (RGRD…KGDE), and 1666–1680 (VGEK…EDGR). Residues 1813-1822 (PPGPPGPPGV) show a composition bias toward pro residues. Composition is skewed to basic and acidic residues over residues 1846–1855 (EDGRKGEKGD), 1862–1871 (EGPDGPKGER), and 1968–1984 (PERR…RGPP). Residues 2002–2004 (RGD) carry the Cell attachment site motif. Over residues 2040–2049 (GRAGGSGEAG) the composition is skewed to gly residues. Positions 2050–2068 (RPGERGERGEKGERGDQGR) are enriched in basic and acidic residues. Positions 2063–2065 (RGD) match the Cell attachment site motif. The segment covering 2074–2083 (LPGPPGPPGP) has biased composition (pro residues). Residues 2130–2140 (DVGEPGKRGHD) are compositionally biased toward basic and acidic residues. 4 positions are modified to 4-hydroxyproline: Pro-2158, Pro-2167, Pro-2176, and Pro-2179. Low complexity-rich tracts occupy residues 2182 to 2197 (PGLA…SGLK), 2226 to 2241 (SGLV…PGQV), 2279 to 2299 (PKGE…PPGA), and 2306 to 2317 (PGDLAGALLGEP). A compositionally biased stretch (basic and acidic residues) spans 2319 to 2335 (AKGDRGLPGPRGEKGEA). Over residues 2414–2427 (ERGLAGPPGREGAP) the composition is skewed to low complexity. Composition is skewed to basic and acidic residues over residues 2462-2477 (RGER…DGHP) and 2525-2544 (AKGD…KGPR). Residues 2576 to 2594 (PKGEPGAAGIPGEPGAPGK) are compositionally biased toward low complexity. A Cell attachment site motif is present at residues 2601 to 2603 (RGD). Basic and acidic residues predominate over residues 2615–2636 (LKGEKGIKGTCGRDGERGDKGE). Residues Lys-2616 and Lys-2622 each carry the 5-hydroxylysine modification. Positions 2631–2633 (RGD) match the Cell attachment site motif. Pro-2655, Pro-2658, and Pro-2664 each carry 4-hydroxyproline. Residues 2695-2704 (GPPGVGGFPG) show a composition bias toward gly residues. Residues 2776–2944 (LTEDDIRDFV…GVHSQKTGAA (169 aa)) form a nonhelical region (NC2) region. Residues 2879–2931 (CSLPLDEGSCTAYTLRWYHRAVPGGTACHPFVYGGCGGNANRFGTREACERRC) form the BPTI/Kunitz inhibitor domain. Disulfide bonds link Cys-2879-Cys-2931, Cys-2888-Cys-2914, and Cys-2906-Cys-2927.

In terms of assembly, homotrimer. Interacts with MIA3/TANGO1; facilitating its loading into transport carriers and subsequent secretion. Prolines at the third position of the tripeptide repeating unit (G-X-Y) are hydroxylated in some or all of the chains.

The protein localises to the secreted. Its subcellular location is the extracellular space. The protein resides in the extracellular matrix. It is found in the basement membrane. Its function is as follows. Stratified squamous epithelial basement membrane protein that forms anchoring fibrils which may contribute to epithelial basement membrane organization and adherence by interacting with extracellular matrix (ECM) proteins such as type IV collagen. The protein is Collagen alpha-1(VII) chain of Mus musculus (Mouse).